We begin with the raw amino-acid sequence, 1756 residues long: Transposon Ty1-PR2 Gag-Pol polyprotein (1756 aa).

Composition is skewed to polar residues over residues 1–10, 48–60, and 127–152; these read MESQQLSNYP, TKAN…TPAS, and QSQF…GNTF. Disordered stretches follow at residues 1 to 93, 126 to 173, and 352 to 421; these read MESQ…MMTQ, PQSQ…RPPP, and GSRN…SKST. The span at 153–165 shows a compositional bias: low complexity; it reads TDSSSADSDMTST. The segment at 299–401 is RNA-binding; it reads NNGIHINNKV…NSKSKTARAH (103 aa). A compositionally biased stretch (low complexity) spans 402–418; the sequence is NVSTSNNSPSTDNDSIS. Residue Asp-461 is the For protease activity; shared with dimeric partner of the active site. An integrase-type zinc finger-like region spans residues 583–640; sequence NVHTSESTRKYPYPFIHRMLAHANAQTIRYSLKNNTITYFNESDVDWSSAIDYQCPDC. Residues 660–836 form the Integrase catalytic domain; the sequence is NSYEPFQYLH…AGLDISTLLP (177 aa). Mg(2+)-binding residues include Asp-671 and Asp-736. Disordered stretches follow at residues 957-1088, 1093-1112, and 1131-1188; these read SKAV…ETEK, RSPS…NIVP, and DLPL…DNET. Residues 961-970 are compositionally biased toward low complexity; sequence SPTDSTPPST. Positions 1006–1016 are enriched in polar residues; it reads STPQISNIEST. Over residues 1039–1054 the composition is skewed to basic and acidic residues; the sequence is ESSHASKSKDFRHSDS. 2 stretches are compositionally biased toward polar residues: residues 1055–1083 and 1102–1112; these read YSEN…QISD and PENNSSHNIVP. A Bipartite nuclear localization signal motif is present at residues 1179-1213; that stretch reads KKRSLEDNETEIKVSRDTWNTKNMRSLEPPRSKKR. The region spanning 1339–1477 is the Reverse transcriptase Ty1/copia-type domain; that stretch reads NNYYITQLDI…DILGLEIKYQ (139 aa). Mg(2+)-binding residues include Asp-1347, Asp-1428, Asp-1429, Asp-1611, Glu-1653, and Asp-1686. In terms of domain architecture, RNase H Ty1/copia-type spans 1611–1753; sequence DASYGNQPYY…IKTFKLLTNK (143 aa).

As to quaternary structure, the capsid protein forms a homotrimer, from which the VLPs are assembled. The protease is a homodimer, whose active site consists of two apposed aspartic acid residues. In terms of processing, initially, virus-like particles (VLPs) are composed of the structural unprocessed proteins Gag and Gag-Pol, and also contain the host initiator methionine tRNA (tRNA(i)-Met) which serves as a primer for minus-strand DNA synthesis, and a dimer of genomic Ty RNA. Processing of the polyproteins occurs within the particle and proceeds by an ordered pathway, called maturation. First, the protease (PR) is released by autocatalytic cleavage of the Gag-Pol polyprotein yielding capsid protein p45 and a Pol-p154 precursor protein. This cleavage is a prerequisite for subsequent processing of Pol-p154 at the remaining sites to release the mature structural and catalytic proteins. Maturation takes place prior to the RT reaction and is required to produce transposition-competent VLPs.

Its subcellular location is the cytoplasm. It localises to the nucleus. The catalysed reaction is DNA(n) + a 2'-deoxyribonucleoside 5'-triphosphate = DNA(n+1) + diphosphate. It carries out the reaction Endonucleolytic cleavage to 5'-phosphomonoester.. In terms of biological role, capsid protein (CA) is the structural component of the virus-like particle (VLP), forming the shell that encapsulates the retrotransposons dimeric RNA genome. The particles are assembled from trimer-clustered units and there are holes in the capsid shells that allow for the diffusion of macromolecules. CA also has nucleocapsid-like chaperone activity, promoting primer tRNA(i)-Met annealing to the multipartite primer-binding site (PBS), dimerization of Ty1 RNA and initiation of reverse transcription. The aspartyl protease (PR) mediates the proteolytic cleavages of the Gag and Gag-Pol polyproteins after assembly of the VLP. Its function is as follows. Reverse transcriptase/ribonuclease H (RT) is a multifunctional enzyme that catalyzes the conversion of the retro-elements RNA genome into dsDNA within the VLP. The enzyme displays a DNA polymerase activity that can copy either DNA or RNA templates, and a ribonuclease H (RNase H) activity that cleaves the RNA strand of RNA-DNA heteroduplexes during plus-strand synthesis and hydrolyzes RNA primers. The conversion leads to a linear dsDNA copy of the retrotransposon that includes long terminal repeats (LTRs) at both ends. Functionally, integrase (IN) targets the VLP to the nucleus, where a subparticle preintegration complex (PIC) containing at least integrase and the newly synthesized dsDNA copy of the retrotransposon must transit the nuclear membrane. Once in the nucleus, integrase performs the integration of the dsDNA into the host genome. This Saccharomyces cerevisiae (strain ATCC 204508 / S288c) (Baker's yeast) protein is Transposon Ty1-PR2 Gag-Pol polyprotein (TY1B-PR2).